The following is a 137-amino-acid chain: Small ribosomal subunit protein bS16m (137 aa).

A mitochondrion-targeting transit peptide spans 1 to 34 (MVHLTTLLCKAYRGGHLTIRLALGGCTNRPFYRI). The residue at position 130 (Thr130) is a Phosphothreonine.

This sequence belongs to the bacterial ribosomal protein bS16 family. In terms of assembly, component of the mitochondrial small ribosomal subunit (mt-SSU). Mature mammalian 55S mitochondrial ribosomes consist of a small (28S) and a large (39S) subunit. The 28S small subunit contains a 12S ribosomal RNA (12S mt-rRNA) and 30 different proteins. The 39S large subunit contains a 16S rRNA (16S mt-rRNA), a copy of mitochondrial valine transfer RNA (mt-tRNA(Val)), which plays an integral structural role, and 52 different proteins. bS16m has a zinc binding site.

The protein resides in the mitochondrion. This Homo sapiens (Human) protein is Small ribosomal subunit protein bS16m (MRPS16).